Reading from the N-terminus, the 131-residue chain is Small ribosomal subunit protein uS8 (131 aa).

Belongs to the universal ribosomal protein uS8 family. As to quaternary structure, part of the 30S ribosomal subunit. Contacts proteins S5 and S12.

One of the primary rRNA binding proteins, it binds directly to 16S rRNA central domain where it helps coordinate assembly of the platform of the 30S subunit. The sequence is that of Small ribosomal subunit protein uS8 from Thermodesulfovibrio yellowstonii (strain ATCC 51303 / DSM 11347 / YP87).